Reading from the N-terminus, the 124-residue chain is S-adenosylmethionine decarboxylase proenzyme (124 aa).

Residue Ser71 is the Schiff-base intermediate with substrate; via pyruvic acid of the active site. Position 71 is a pyruvic acid (Ser); by autocatalysis (Ser71). His76 (proton acceptor; for processing activity) is an active-site residue. Cys91 serves as the catalytic Proton donor; for catalytic activity.

This sequence belongs to the prokaryotic AdoMetDC family. Type 1 subfamily. In terms of assembly, heterotetramer of two alpha and two beta chains arranged as a dimer of alpha/beta heterodimers. The cofactor is pyruvate. Post-translationally, is synthesized initially as an inactive proenzyme. Formation of the active enzyme involves a self-maturation process in which the active site pyruvoyl group is generated from an internal serine residue via an autocatalytic post-translational modification. Two non-identical subunits are generated from the proenzyme in this reaction, and the pyruvate is formed at the N-terminus of the alpha chain, which is derived from the carboxyl end of the proenzyme. The post-translation cleavage follows an unusual pathway, termed non-hydrolytic serinolysis, in which the side chain hydroxyl group of the serine supplies its oxygen atom to form the C-terminus of the beta chain, while the remainder of the serine residue undergoes an oxidative deamination to produce ammonia and the pyruvoyl group blocking the N-terminus of the alpha chain.

It carries out the reaction S-adenosyl-L-methionine + H(+) = S-adenosyl 3-(methylsulfanyl)propylamine + CO2. It participates in amine and polyamine biosynthesis; S-adenosylmethioninamine biosynthesis; S-adenosylmethioninamine from S-adenosyl-L-methionine: step 1/1. With respect to regulation, competitively inhibited by methylglyoxal bis-guanylhydrazone. Irreversibly inhibited by NaBH(4) in vitro. Its function is as follows. Catalyzes the decarboxylation of S-adenosylmethionine to S-adenosylmethioninamine (dcAdoMet), the propylamine donor required for the synthesis of the polyamines spermine and spermidine from the diamine putrescine. Has no arginine decarboxylase (ArgDC) activity. The protein is S-adenosylmethionine decarboxylase proenzyme (speH) of Saccharolobus solfataricus (strain ATCC 35092 / DSM 1617 / JCM 11322 / P2) (Sulfolobus solfataricus).